A 265-amino-acid polypeptide reads, in one-letter code: Capsule polysaccharide export inner-membrane protein BexB (265 aa).

6 helical membrane-spanning segments follow: residues 37-57 (IGFL…VMMW), 64-84 (KFST…AMMW), 121-141 (VAGA…IGWI), 148-168 (FYML…GLII), 178-198 (FGKI…AFFF), and 235-255 (ESIG…LVMV). Positions 37-258 (IGFLWLFVEP…LMGLVMVKNF (222 aa)) constitute an ABC transmembrane type-2 domain.

It belongs to the ABC-2 integral membrane protein family.

Its subcellular location is the cell inner membrane. May form an ATP-driven capsule polysaccharide export apparatus, in association with the BexA, BexC and BexD proteins. The sequence is that of Capsule polysaccharide export inner-membrane protein BexB (bexB) from Haemophilus influenzae.